The sequence spans 387 residues: Patatin-11 (387 aa).

The first 23 residues, 1 to 23, serve as a signal peptide directing secretion; that stretch reads MATTKSVLVLIFMILATTSSTFA. The PNPLA domain occupies 32–230; the sequence is LSTDGGGIKG…TVGDPALLSL (199 aa). The short motif at 36-41 is the GXGXXG element; the sequence is GGGIKG. Positions 75 to 79 match the GXSXG motif; the sequence is GTSTG. Ser-77 acts as the Nucleophile in catalysis. N-linked (GlcNAc...) asparagine glycosylation is present at Asn-115. Asp-216 serves as the catalytic Proton acceptor. The DGA/G signature appears at 216 to 218; that stretch reads DGG. Residues 322–385 adopt a coiled-coil conformation; that stretch reads ENALNGTTTE…DRKKLRANKA (64 aa). Asn-326 carries N-linked (GlcNAc...) asparagine glycosylation.

The protein belongs to the patatin family. In terms of tissue distribution, tuber.

It is found in the vacuole. Probable lipolytic acyl hydrolase (LAH), an activity which is thought to be involved in the response of tubers to pathogens. The chain is Patatin-11 from Solanum tuberosum (Potato).